The sequence spans 101 residues: NADH-quinone oxidoreductase subunit K (101 aa).

A run of 3 helical transmembrane segments spans residues 4-24 (LTHFLVLAAILFAISVLGIFL), 30-50 (IILLMAIELMLLAVNFNFIAF), and 61-81 (IFVFFILTVAAAESAIGLAIL).

The protein belongs to the complex I subunit 4L family. As to quaternary structure, NDH-1 is composed of 14 different subunits. Subunits NuoA, H, J, K, L, M, N constitute the membrane sector of the complex.

It localises to the cell inner membrane. It carries out the reaction a quinone + NADH + 5 H(+)(in) = a quinol + NAD(+) + 4 H(+)(out). Its function is as follows. NDH-1 shuttles electrons from NADH, via FMN and iron-sulfur (Fe-S) centers, to quinones in the respiratory chain. The immediate electron acceptor for the enzyme in this species is believed to be ubiquinone. Couples the redox reaction to proton translocation (for every two electrons transferred, four hydrogen ions are translocated across the cytoplasmic membrane), and thus conserves the redox energy in a proton gradient. The polypeptide is NADH-quinone oxidoreductase subunit K (Chromobacterium violaceum (strain ATCC 12472 / DSM 30191 / JCM 1249 / CCUG 213 / NBRC 12614 / NCIMB 9131 / NCTC 9757 / MK)).